The following is a 275-amino-acid chain: 3',5'-cyclic adenosine monophosphate phosphodiesterase CpdA (275 aa).

Fe cation is bound by residues D22, H24, D64, N94, H164, H203, and H205. Residues H24, D64, and 94 to 95 (NH) contribute to the AMP site. H205 is a binding site for AMP.

This sequence belongs to the cyclic nucleotide phosphodiesterase class-III family. The cofactor is Fe(2+).

The catalysed reaction is 3',5'-cyclic AMP + H2O = AMP + H(+). Functionally, hydrolyzes cAMP to 5'-AMP. Plays an important regulatory role in modulating the intracellular concentration of cAMP, thereby influencing cAMP-dependent processes. The protein is 3',5'-cyclic adenosine monophosphate phosphodiesterase CpdA of Escherichia coli O157:H7.